A 308-amino-acid polypeptide reads, in one-letter code: Transmembrane and ubiquitin-like domain-containing protein 1 (308 aa).

The helical transmembrane segment at 11 to 31 (VTVLFALVLFFMVLMLAWVST) threads the bilayer. A disordered region spans residues 39-162 (THWIRPEPAQ…GLGDGTTAQS (124 aa)). Residues 63–93 (PSQTLTNADPNSETVDSSDSTQSSREFQNAG) show a composition bias toward polar residues. Low complexity predominate over residues 103–115 (SSSGSTVSTGGSV). Residues 132 to 149 (PNFTVSSRDPQAGASSSL) show a composition bias toward polar residues. The Ubiquitin-like domain maps to 169–242 (IHLRLKFLND…LHCHISQHAS (74 aa)). The next 2 helical transmembrane spans lie at 253 to 273 (VPLN…MLLW) and 283 to 303 (FTGT…AIAF).

Its subcellular location is the membrane. The protein localises to the cytoplasm. It localises to the nucleus. Functionally, may contribute to the regulation of translation during cell-cycle progression. May contribute to the regulation of cell proliferation. The membrane form is involved in sterol-regulated ubiquitination and degradation of HMG-CoA reductase HMGCR. May be involved in centrosome assembly. In Xenopus laevis (African clawed frog), this protein is Transmembrane and ubiquitin-like domain-containing protein 1 (tmub1).